The following is a 255-amino-acid chain: Anamorsin homolog (255 aa).

The N-terminal SAM-like domain stretch occupies residues 1–163 (MPKETLVVSK…VRPNWKSKTD (163 aa)). Residues 164–185 (KKSPSMIDAAPIDGYISKAPDY) are linker. [2Fe-2S] cluster is bound by residues C188, C195, C198, and C200. Positions 188–200 (CSTKPRACANCTC) are fe-S binding site A. [4Fe-4S] cluster-binding residues include C224, C227, C235, and C238. 2 short sequence motifs (cx2C motif) span residues 224-227 (CGNC) and 235-238 (CESC). The segment at 224–238 (CGNCYLGDAFRCESC) is fe-S binding site B.

The protein belongs to the anamorsin family. Monomer. [2Fe-2S] cluster serves as cofactor. The cofactor is [4Fe-4S] cluster.

The protein resides in the cytoplasm. It is found in the mitochondrion intermembrane space. Its function is as follows. Component of the cytosolic iron-sulfur (Fe-S) protein assembly (CIA) machinery. Required for the maturation of extramitochondrial Fe-S proteins. Part of an electron transfer chain functioning in an early step of cytosolic Fe-S biogenesis, facilitating the de novo assembly of a [4Fe-4S] cluster on the cytosolic Fe-S scaffold complex. Electrons are transferred from NADPH via a FAD- and FMN-containing diflavin oxidoreductase. Together with the diflavin oxidoreductase, also required for the assembly of the diferric tyrosyl radical cofactor of ribonucleotide reductase (RNR), probably by providing electrons for reduction during radical cofactor maturation in the catalytic small subunit. The polypeptide is Anamorsin homolog (Theileria annulata).